A 150-amino-acid chain; its full sequence is Ribosome maturation factor RimP (150 aa).

The protein belongs to the RimP family.

It is found in the cytoplasm. Functionally, required for maturation of 30S ribosomal subunits. The protein is Ribosome maturation factor RimP of Acaryochloris marina (strain MBIC 11017).